A 150-amino-acid polypeptide reads, in one-letter code: 3-dehydroquinate dehydratase (150 aa).

Tyr26 serves as the catalytic Proton acceptor. 3 residues coordinate substrate: Asn77, His83, and Asp90. Residue His103 is the Proton donor of the active site. Residues 104 to 105 (LS) and Arg114 contribute to the substrate site.

This sequence belongs to the type-II 3-dehydroquinase family. Homododecamer.

The enzyme catalyses 3-dehydroquinate = 3-dehydroshikimate + H2O. The protein operates within metabolic intermediate biosynthesis; chorismate biosynthesis; chorismate from D-erythrose 4-phosphate and phosphoenolpyruvate: step 3/7. Functionally, catalyzes a trans-dehydration via an enolate intermediate. In Photobacterium profundum (strain SS9), this protein is 3-dehydroquinate dehydratase.